The following is a 451-amino-acid chain: AP-3 complex subunit mu (451 aa).

In terms of domain architecture, MHD spans 191 to 450; sequence NNEIYVDLVE…TSRAGDYIVR (260 aa).

It belongs to the adaptor complexes medium subunit family. Adaptor protein complex 3 (AP-3) is a heterotetramer composed of 2 large adaptins (APL5 and APL6), a medium adaptin (APM3) and a small adaptin (APS3).

The protein localises to the golgi apparatus. The protein resides in the cytoplasmic vesicle membrane. Its function is as follows. Part of the AP-3 complex, an adaptor-related complex which is not clathrin-associated. The complex is associated with the Golgi region as well as more peripheral structures. It facilitates the budding of vesicles from the Golgi membrane and may be directly involved in trafficking to the vacuole. The polypeptide is AP-3 complex subunit mu (APM3) (Eremothecium gossypii (strain ATCC 10895 / CBS 109.51 / FGSC 9923 / NRRL Y-1056) (Yeast)).